The chain runs to 127 residues: Fluoride-specific ion channel FluC (127 aa).

The next 3 membrane-spanning stretches (helical) occupy residues threonine 37 to leucine 57, leucine 68 to valine 88, and leucine 102 to alanine 122. Na(+)-binding residues include glycine 76 and threonine 79.

The protein belongs to the fluoride channel Fluc/FEX (TC 1.A.43) family.

It is found in the cell inner membrane. It carries out the reaction fluoride(in) = fluoride(out). Its activity is regulated as follows. Na(+) is not transported, but it plays an essential structural role and its presence is essential for fluoride channel function. Fluoride-specific ion channel. Important for reducing fluoride concentration in the cell, thus reducing its toxicity. This is Fluoride-specific ion channel FluC from Hyphomonas neptunium (strain ATCC 15444).